Here is a 188-residue protein sequence, read N- to C-terminus: Putative manganese efflux pump MntP (188 aa).

A run of 6 helical transmembrane segments spans residues 3-23 (LYAL…VALA), 35-55 (IAAT…AGWV), 70-90 (WAAF…GLSG), 104-126 (WLTV…GLAF), 140-160 (MATT…GVLF), and 167-187 (AGGL…LGLI).

Belongs to the MntP (TC 9.B.29) family.

It localises to the cell inner membrane. Probably functions as a manganese efflux pump. This chain is Putative manganese efflux pump MntP, found in Neisseria meningitidis serogroup C / serotype 2a (strain ATCC 700532 / DSM 15464 / FAM18).